The primary structure comprises 231 residues: Regulatory protein VanRc (231 aa).

Residues 4 to 117 (KIVVVDDEKE…EVVARVKTQL (114 aa)) enclose the Response regulatory domain. A 4-aspartylphosphate modification is found at Asp-53. The segment at residues 132 to 231 (VEEYEKDGLI…VWGVGYIIEK (100 aa)) is a DNA-binding region (ompR/PhoB-type).

Post-translationally, phosphorylated by VanSc.

It is found in the cytoplasm. Its function is as follows. Member of the two-component regulatory system VanSc/VanRc. Binds to the promoter regions of target genes. Activates the transcription of vanC1 and vanXYC in response to vancomycin which results in vancomycin resistance. The protein is Regulatory protein VanRc of Enterococcus gallinarum.